Reading from the N-terminus, the 250-residue chain is Global transcriptional regulator CodY (250 aa).

The interval 1–147 (MSTLLEKTRK…GATVVGLEIL (147 aa)) is GAF domain. Residues 195 to 214 (ASKIADKVGITRSVIVNALR) constitute a DNA-binding region (H-T-H motif).

This sequence belongs to the CodY family.

Its subcellular location is the cytoplasm. Functionally, DNA-binding global transcriptional regulator which is involved in the adaptive response to starvation and acts by directly or indirectly controlling the expression of numerous genes in response to nutrient availability. During rapid exponential growth, CodY is highly active and represses genes whose products allow adaptation to nutrient depletion. This is Global transcriptional regulator CodY from Thermoanaerobacter sp. (strain X514).